Consider the following 436-residue polypeptide: MSRMYDRSEQLFAEAKTLIPGGVNSPVRAFKSVGRNPVFIERAEGAYLYDVDGNKYVDYVGSWGPMIVGHAHPEVSEALKAAIDRGTSYGAPTELESRLAKLILEAFPAMDMVRMVNSGTEATMSALRLARGYTGRSKIVKFEGCYHGHADSLLIKAGSGALTLGVPTSPGVPANIANNTITAPYNDLETLKAIFQEAGDDIAAIIIEGVPGNMGVVPPAPGYLQGVRELTRQYGALMIVDEVMSGFRVDFGGAQTLYGVEPDLTCLGKIIGGGLPVGAYGGKAEIMEKVSPAGPIYQAGTLSGNPLAMTAGIITLEILKRPGTYAALDEKAAYLADGLAKAAEKAGVPVWTNRVGSMLTGFFTDRPVVDFASACTSDTAAFGTYFRAMLDRGVYLACSQFEAAFLSLAMTKEDLDFTIAAAEEAFQVVAAERAKA.

The residue at position 269 (K269) is an N6-(pyridoxal phosphate)lysine.

It belongs to the class-III pyridoxal-phosphate-dependent aminotransferase family. HemL subfamily. As to quaternary structure, homodimer. The cofactor is pyridoxal 5'-phosphate.

It is found in the cytoplasm. It catalyses the reaction (S)-4-amino-5-oxopentanoate = 5-aminolevulinate. The protein operates within porphyrin-containing compound metabolism; protoporphyrin-IX biosynthesis; 5-aminolevulinate from L-glutamyl-tRNA(Glu): step 2/2. Its pathway is porphyrin-containing compound metabolism; chlorophyll biosynthesis. The chain is Glutamate-1-semialdehyde 2,1-aminomutase from Heliobacterium modesticaldum (strain ATCC 51547 / Ice1).